We begin with the raw amino-acid sequence, 199 residues long: dITP/XTP pyrophosphatase (199 aa).

Residue 7–12 (TTNLHK) coordinates substrate. Mg(2+)-binding residues include Glu-41 and Asp-70. Catalysis depends on Asp-70, which acts as the Proton acceptor. Residues Ser-71, 154-157 (FGYD), Lys-177, and 182-183 (HR) each bind substrate.

It belongs to the HAM1 NTPase family. As to quaternary structure, homodimer. Mg(2+) is required as a cofactor.

It catalyses the reaction XTP + H2O = XMP + diphosphate + H(+). It carries out the reaction dITP + H2O = dIMP + diphosphate + H(+). The catalysed reaction is ITP + H2O = IMP + diphosphate + H(+). Functionally, pyrophosphatase that catalyzes the hydrolysis of nucleoside triphosphates to their monophosphate derivatives, with a high preference for the non-canonical purine nucleotides XTP (xanthosine triphosphate), dITP (deoxyinosine triphosphate) and ITP. Seems to function as a house-cleaning enzyme that removes non-canonical purine nucleotides from the nucleotide pool, thus preventing their incorporation into DNA/RNA and avoiding chromosomal lesions. This is dITP/XTP pyrophosphatase from Protochlamydia amoebophila (strain UWE25).